The following is a 425-amino-acid chain: Serine--tRNA ligase (425 aa).

Position 233-235 (233-235 (TAE)) interacts with L-serine. 264 to 266 (RAE) is an ATP binding site. Glu-287 contributes to the L-serine binding site. 351 to 354 (EISS) contacts ATP. Residue Ser-387 participates in L-serine binding.

Belongs to the class-II aminoacyl-tRNA synthetase family. Type-1 seryl-tRNA synthetase subfamily. As to quaternary structure, homodimer. The tRNA molecule binds across the dimer.

Its subcellular location is the cytoplasm. The enzyme catalyses tRNA(Ser) + L-serine + ATP = L-seryl-tRNA(Ser) + AMP + diphosphate + H(+). The catalysed reaction is tRNA(Sec) + L-serine + ATP = L-seryl-tRNA(Sec) + AMP + diphosphate + H(+). It functions in the pathway aminoacyl-tRNA biosynthesis; selenocysteinyl-tRNA(Sec) biosynthesis; L-seryl-tRNA(Sec) from L-serine and tRNA(Sec): step 1/1. Catalyzes the attachment of serine to tRNA(Ser). Is also able to aminoacylate tRNA(Sec) with serine, to form the misacylated tRNA L-seryl-tRNA(Sec), which will be further converted into selenocysteinyl-tRNA(Sec). The protein is Serine--tRNA ligase of Clostridium perfringens (strain SM101 / Type A).